The primary structure comprises 105 residues: Small cysteine and glycine repeat-containing protein 4 (105 aa).

Residues 4–87 (CGCGSCGGCG…RRTCGSCGCG (84 aa)) form a 14 X 2 AA repeats of CG region.

It belongs to the KRTAP type 28 family.

In terms of biological role, in the hair cortex, hair keratin intermediate filaments are embedded in an interfilamentous matrix, consisting of hair keratin-associated proteins (KRTAP), which are essential for the formation of a rigid and resistant hair shaft through their extensive disulfide bond cross-linking with abundant cysteine residues of hair keratins. The matrix proteins include the high-sulfur and high-glycine-tyrosine keratins. The chain is Small cysteine and glycine repeat-containing protein 4 from Homo sapiens (Human).